Consider the following 266-residue polypeptide: MKIAIAGTIGRMGKMLIEAVLNTADAQLVGALEHTSCPQLGEDAGAFLGKKTGVLISSDVAQVLANAQFLIDFTRPEGTMAHLAIAEKTGTKMIIGTTGLSADQIAGLKKVSANLAIVFAPNMSVGVNATFKLLEIAAKMLSQGYDIEIIEAHHKHKVDAPSGTALKMGEVIAEALGEKLDDVAVYAREGHTGERKEGSIGFAIIRGGDIVGDHTVLFAGDGERIEISHKSSSRQSYAQGSLRAARFLQNQKNGLFDMQDVLGLRK.

NAD(+) contacts are provided by residues 7-12, glutamate 33, 96-98, and 120-123; these read GTIGRM, GTT, and APNM. Histidine 153 serves as the catalytic Proton donor/acceptor. Position 154 (histidine 154) interacts with (S)-2,3,4,5-tetrahydrodipicolinate. The Proton donor role is filled by lysine 157. 163-164 contacts (S)-2,3,4,5-tetrahydrodipicolinate; the sequence is GT.

Belongs to the DapB family.

The protein resides in the cytoplasm. The catalysed reaction is (S)-2,3,4,5-tetrahydrodipicolinate + NAD(+) + H2O = (2S,4S)-4-hydroxy-2,3,4,5-tetrahydrodipicolinate + NADH + H(+). It catalyses the reaction (S)-2,3,4,5-tetrahydrodipicolinate + NADP(+) + H2O = (2S,4S)-4-hydroxy-2,3,4,5-tetrahydrodipicolinate + NADPH + H(+). The protein operates within amino-acid biosynthesis; L-lysine biosynthesis via DAP pathway; (S)-tetrahydrodipicolinate from L-aspartate: step 4/4. Functionally, catalyzes the conversion of 4-hydroxy-tetrahydrodipicolinate (HTPA) to tetrahydrodipicolinate. In Polynucleobacter necessarius subsp. necessarius (strain STIR1), this protein is 4-hydroxy-tetrahydrodipicolinate reductase.